A 328-amino-acid chain; its full sequence is Aryl-hydrocarbon-interacting protein-like 1 (328 aa).

The PPIase FKBP-type domain occupies 53-145 (KQVGHPMHII…DLDELQKEPQ (93 aa)). TPR repeat units lie at residues 178–211 (VPIL…LRNL), 230–263 (NTLI…HPGI), and 264–297 (VKAY…EPSM).

Directly interacts with NUB1.

The protein localises to the cytoplasm. It is found in the nucleus. Its function is as follows. May be important in protein trafficking and/or protein folding and stabilization. The sequence is that of Aryl-hydrocarbon-interacting protein-like 1 (AIPL1) from Bos taurus (Bovine).